A 647-amino-acid polypeptide reads, in one-letter code: Epithelial sodium channel subunit beta (647 aa).

At 1 to 57 (MIHGKMKRLKRYFTRALHRIQKGPGYTYKELLVWFCDNTNTHGPKRIIKEGPKKRVM) the chain is on the cytoplasmic side. A helical transmembrane segment spans residues 58–78 (WFILTLVFAGLVFWQWGVLIL). Over 79–552 (TYLSYGVSVS…GGQFGFWMGG (474 aa)) the chain is Extracellular. 8 disulfide bridges follow: cysteine 104/cysteine 291, cysteine 215/cysteine 222, cysteine 268/cysteine 275, cysteine 381/cysteine 468, cysteine 406/cysteine 464, cysteine 410/cysteine 460, cysteine 419/cysteine 446, and cysteine 421/cysteine 435. Residues 553–573 (SVLCIIEFGEIIIDCMWITIL) form a helical membrane-spanning segment. The Cytoplasmic portion of the chain corresponds to 574-647 (KFLAWSRNRR…AEPVSSDEEN (74 aa)). The disordered stretch occupies residues 586–647 (RKRPQYSDPP…AEPVSSDEEN (62 aa)).

It belongs to the amiloride-sensitive sodium channel (TC 1.A.6) family. SCNN1B subfamily. Component of the heterotrimeric epithelial sodium channel (ENaC) composed of an alpha/SCNN1A, a beta/SCNN1B and a gamma/SCNN1G subunit.

Its subcellular location is the apical cell membrane. The protein resides in the cytoplasmic vesicle membrane. It carries out the reaction Na(+)(in) = Na(+)(out). Its activity is regulated as follows. Originally identified and characterized by its inhibition by the diuretic drug amiloride. This is one of the three pore-forming subunits of the heterotrimeric epithelial sodium channel (ENaC), a critical regulator of sodium balance and fluid homeostasis. ENaC operates in epithelial tissues, where it mediates the electrodiffusion of sodium ions from extracellular fluid through the apical membrane of cells, with water following osmotically. The chain is Epithelial sodium channel subunit beta (scnn1b-a) from Xenopus laevis (African clawed frog).